A 580-amino-acid chain; its full sequence is External alternative NAD(P)H-ubiquinone oxidoreductase B3, mitochondrial (580 aa).

Residues 1 to 38 constitute a mitochondrion transit peptide; that stretch reads MRPFAYFERLSQAFHDYPSLSKILVVSTISGGGLIVYS. FAD is bound at residue 57 to 87; sequence KVVLLGTGWAGASFLKTLNNSSYEVQVISPR. Residue 221–257 coordinates NAD(+); that stretch reads LHFVVVGGGPTGVEFASELHDFVNEDLVKLYPKAKNL. The 36-residue stretch at 377-412 folds into the EF-hand domain; the sequence is KVMEDIAAIFKKADKENSGTLTMKEFHEVMSDICDR. 4 residues coordinate Ca(2+): D390, S394, T396, and E401. The Microbody targeting signal motif lies at 571-580; the sequence is FIFGRDSSRI.

Belongs to the NADH dehydrogenase family. FAD serves as cofactor. In terms of tissue distribution, expressed at low levels in seedlings, roots, stems, buds and flowers and, to a lower extent, in leaves and cotyledons.

Its subcellular location is the mitochondrion inner membrane. The protein resides in the peroxisome. It carries out the reaction a quinone + NADH + H(+) = a quinol + NAD(+). The enzyme catalyses a ubiquinone + NADH + H(+) = a ubiquinol + NAD(+). In terms of biological role, alternative NADH-ubiquinone oxidoreductase which catalyzes the oxidation of mitochondrial NADH does not translocate protons across the inner mitochondrial membrane. The protein is External alternative NAD(P)H-ubiquinone oxidoreductase B3, mitochondrial (NDB3) of Arabidopsis thaliana (Mouse-ear cress).